A 133-amino-acid polypeptide reads, in one-letter code: uncharacterized protein (133 aa).

The N-terminal stretch at 1–23 is a signal peptide; sequence MSRKIIPALTIFFGPILILTAIT. Positions 82–133 are disordered; the sequence is ESIKNQNSLNKEKQQQQQQQQQQQQQQQQQQQQQQKPNTPPTPLTTPSTPKK. The segment covering 96–118 has biased composition (low complexity); the sequence is QQQQQQQQQQQQQQQQQQQQQKP.

It is found in the secreted. This is an uncharacterized protein from Dictyostelium discoideum (Social amoeba).